A 260-amino-acid polypeptide reads, in one-letter code: OCIA domain-containing protein 1 (260 aa).

Positions 1-110 (MDSPLSDGSR…MRLPNSRLGE (110 aa)) constitute an OCIA domain. The interval 146 to 260 (DVYTDEGLNP…KNKYGDSWQD (115 aa)) is disordered. The segment covering 155–164 (PSRSTALNLD) has biased composition (polar residues). A compositionally biased stretch (basic and acidic residues) spans 205 to 215 (EDLRKKNREGY).

The protein belongs to the OCIAD1 family.

This is OCIA domain-containing protein 1 from Drosophila pseudoobscura pseudoobscura (Fruit fly).